The following is a 291-amino-acid chain: RPE-retinal G protein-coupled receptor (291 aa).

Residues 1-15 (MAESGTLPTGFGELE) lie on the Extracellular side of the membrane. A helical transmembrane segment spans residues 16-36 (VLAVGTVLLVEALSGLSLNIL). Residues 37-52 (TILSFCKTPELRTPSH) are Cytoplasmic-facing. A helical transmembrane segment spans residues 53–73 (LLVLSLALADSGISLNALVAA). Over 74–91 (TSSLLRRWPYGSEGCQAH) the chain is Extracellular. Cys88 and Cys162 are oxidised to a cystine. Residues 92-112 (GFQGFVTALASICSSAAVAWG) form a helical membrane-spanning segment. Residues 113-130 (RYHHFCTRSRLDWNTAVS) are Cytoplasmic-facing. The helical transmembrane segment at 131–151 (LVFFVWLSSAFWAALPLLGWG) threads the bilayer. At 152 to 175 (HYDYEPLGTCCTLDYSRGDRNFTS) the chain is on the extracellular side. Residue Asn172 is glycosylated (N-linked (GlcNAc...) asparagine). A helical transmembrane segment spans residues 176–196 (FLFTMAFFNFLLPLFITVVSY). Topologically, residues 197–219 (RLMEQKLGKTSRPPVNTVLPART) are cytoplasmic. A helical membrane pass occupies residues 220–240 (LLLGWGPYALLYLYATIADAT). The Extracellular portion of the chain corresponds to 241–247 (SISPKLQ). Residues 248–268 (MVPALIAKAVPTVNAMNYALG) form a helical membrane-spanning segment. The residue at position 255 (Lys255) is an N6-(retinylidene)lysine. The Cytoplasmic portion of the chain corresponds to 269–291 (SEMVHRGIWQCLSPQRREHSREQ).

Belongs to the G-protein coupled receptor 1 family. Opsin subfamily. Covalently binds all-trans- and 11-cis-retinal. As to expression, preferentially expressed at high levels in the retinal pigment epithelium (RPE) and Mueller cells of the neural retina.

The protein localises to the membrane. Receptor for all-trans- and 11-cis-retinal. Binds preferentially to the former and may catalyze the isomerization of the chromophore by a retinochrome-like mechanism. This Bos taurus (Bovine) protein is RPE-retinal G protein-coupled receptor (RGR).